The sequence spans 166 residues: Endoribonuclease YbeY (166 aa).

Zn(2+) contacts are provided by H111, H115, and H121. Residues 141 to 166 (LGYPDPYAEDESADHPHSDTPSKDHE) are disordered. A compositionally biased stretch (basic and acidic residues) spans 153 to 166 (ADHPHSDTPSKDHE).

The protein belongs to the endoribonuclease YbeY family. The cofactor is Zn(2+).

The protein resides in the cytoplasm. Single strand-specific metallo-endoribonuclease involved in late-stage 70S ribosome quality control and in maturation of the 3' terminus of the 16S rRNA. The protein is Endoribonuclease YbeY of Pseudomonas savastanoi pv. phaseolicola (strain 1448A / Race 6) (Pseudomonas syringae pv. phaseolicola (strain 1448A / Race 6)).